A 399-amino-acid chain; its full sequence is Tryptophan synthase beta chain (399 aa).

N6-(pyridoxal phosphate)lysine is present on K92.

It belongs to the TrpB family. Tetramer of two alpha and two beta chains. Pyridoxal 5'-phosphate serves as cofactor.

The catalysed reaction is (1S,2R)-1-C-(indol-3-yl)glycerol 3-phosphate + L-serine = D-glyceraldehyde 3-phosphate + L-tryptophan + H2O. The protein operates within amino-acid biosynthesis; L-tryptophan biosynthesis; L-tryptophan from chorismate: step 5/5. In terms of biological role, the beta subunit is responsible for the synthesis of L-tryptophan from indole and L-serine. The polypeptide is Tryptophan synthase beta chain (Nitrosomonas eutropha (strain DSM 101675 / C91 / Nm57)).